Here is a 697-residue protein sequence, read N- to C-terminus: Glycine--tRNA ligase beta subunit (697 aa).

This sequence belongs to the class-II aminoacyl-tRNA synthetase family. In terms of assembly, tetramer of two alpha and two beta subunits.

The protein localises to the cytoplasm. The catalysed reaction is tRNA(Gly) + glycine + ATP = glycyl-tRNA(Gly) + AMP + diphosphate. In Solidesulfovibrio magneticus (strain ATCC 700980 / DSM 13731 / RS-1) (Desulfovibrio magneticus), this protein is Glycine--tRNA ligase beta subunit.